The primary structure comprises 338 residues: Secretory carrier-associated membrane protein 1 (338 aa).

The interval 1-63 is disordered; it reads MSDFDSNPFA…PNVPSTQPAI (63 aa). The residue at position 2 (Ser-2) is an N-acetylserine. Position 2 is a phosphoserine (Ser-2). The Cytoplasmic portion of the chain corresponds to 2–155; it reads SDFDSNPFAD…QKTVKIMYYL (154 aa). Residue Thr-45 is modified to Phosphothreonine. Residues 156-176 form a helical membrane-spanning segment; that stretch reads WMFHAVTLFLNIFGCLAWFCV. Topologically, residues 177-181 are lumenal; it reads DPSRG. A helical membrane pass occupies residues 182–202; the sequence is VDFGLSILWFLLFTPCSFVCW. At 203 to 217 the chain is on the cytoplasmic side; sequence YRPLYGAFRSDSSFR. The helical transmembrane segment at 218–238 threads the bilayer; it reads FFVFFFVYICQFAVHVLQAAG. The Lumenal portion of the chain corresponds to 239 to 261; the sequence is FHNWGNCGWISSLTGLNQSIPVG. The helical transmembrane segment at 262–282 threads the bilayer; that stretch reads IMMIIIAALFTASAVISLVMF. Topologically, residues 283–338 are cytoplasmic; it reads KKVHGLYRTTGASFEKAQQEFATGVMSNKTVQTAAANAASTAATSAAQNAFKGNQI.

It belongs to the SCAMP family. In terms of assembly, interacts with SYNRG, ITSN1 and SLC9A7.

It localises to the golgi apparatus. The protein resides in the trans-Golgi network membrane. The protein localises to the recycling endosome membrane. Functionally, functions in post-Golgi recycling pathways. Acts as a recycling carrier to the cell surface. The chain is Secretory carrier-associated membrane protein 1 (SCAMP1) from Sus scrofa (Pig).